Reading from the N-terminus, the 93-residue chain is MGSRCAKLGTGHGRGHESSMKKLVACVSQDNFSLSSEGEEEEEGEEEEEEEGEEEELPVQGKLLLMEAGQQEEGAEDADSEVQQSPEPKQTRS.

The segment at M1–S93 is disordered. Acidic residues predominate over residues E37–L57. Over residues E81–S93 the composition is skewed to polar residues. Phosphoserine is present on S85.

The protein belongs to the protamine P3 family.

The protein resides in the nucleus. It is found in the chromosome. Its function is as follows. Protamines substitute for histones in the chromatin of sperm during the haploid phase of spermatogenesis. They compact sperm DNA into a highly condensed, stable and inactive complex. This Bos taurus (Bovine) protein is Protamine-3 (PRM3).